Here is a 325-residue protein sequence, read N- to C-terminus: Glutarate 2-hydroxylase (325 aa).

Fe cation contacts are provided by histidine 160, aspartate 162, and histidine 292.

It belongs to the glutarate hydroxylase family. As to quaternary structure, homotetramer. Fe(2+) is required as a cofactor.

It carries out the reaction glutarate + 2-oxoglutarate + O2 = (S)-2-hydroxyglutarate + succinate + CO2. It participates in amino-acid degradation. Functionally, acts as an alpha-ketoglutarate-dependent dioxygenase catalyzing hydroxylation of glutarate (GA) to L-2-hydroxyglutarate (L2HG). Functions in a L-lysine degradation pathway that proceeds via cadaverine, glutarate and L-2-hydroxyglutarate. The protein is Glutarate 2-hydroxylase of Pseudomonas putida (strain ATCC 700007 / DSM 6899 / JCM 31910 / BCRC 17059 / LMG 24140 / F1).